We begin with the raw amino-acid sequence, 152 residues long: Arginine repressor (152 aa).

Belongs to the ArgR family.

The protein localises to the cytoplasm. It functions in the pathway amino-acid biosynthesis; L-arginine biosynthesis [regulation]. Its function is as follows. Regulates arginine biosynthesis genes. In Lachnoclostridium phytofermentans (strain ATCC 700394 / DSM 18823 / ISDg) (Clostridium phytofermentans), this protein is Arginine repressor.